A 72-amino-acid chain; its full sequence is DNA-directed RNA polymerase subunit epsilon (72 aa).

The protein belongs to the RNA polymerase subunit epsilon family. RNAP is composed of a core of 2 alpha, a beta and a beta' subunit. The core is associated with a delta subunit, and at least one of epsilon or omega. When a sigma factor is associated with the core the holoenzyme is formed, which can initiate transcription.

It carries out the reaction RNA(n) + a ribonucleoside 5'-triphosphate = RNA(n+1) + diphosphate. Its function is as follows. A non-essential component of RNA polymerase (RNAP). This Staphylococcus aureus (strain JH1) protein is DNA-directed RNA polymerase subunit epsilon.